The following is a 953-amino-acid chain: Isoleucine--tRNA ligase (953 aa).

A 'HIGH' region motif is present at residues 58 to 68; that stretch reads PYANGSIHIGH. Glu577 is a binding site for L-isoleucyl-5'-AMP. Positions 618-622 match the 'KMSKS' region motif; it reads KMSKS. Position 621 (Lys621) interacts with ATP. Cys916, Cys919, Cys936, and Cys939 together coordinate Zn(2+).

This sequence belongs to the class-I aminoacyl-tRNA synthetase family. IleS type 1 subfamily. In terms of assembly, monomer. Zn(2+) serves as cofactor.

It is found in the cytoplasm. The enzyme catalyses tRNA(Ile) + L-isoleucine + ATP = L-isoleucyl-tRNA(Ile) + AMP + diphosphate. Catalyzes the attachment of isoleucine to tRNA(Ile). As IleRS can inadvertently accommodate and process structurally similar amino acids such as valine, to avoid such errors it has two additional distinct tRNA(Ile)-dependent editing activities. One activity is designated as 'pretransfer' editing and involves the hydrolysis of activated Val-AMP. The other activity is designated 'posttransfer' editing and involves deacylation of mischarged Val-tRNA(Ile). This is Isoleucine--tRNA ligase from Aeromonas salmonicida (strain A449).